A 79-amino-acid polypeptide reads, in one-letter code: Exodeoxyribonuclease 7 small subunit (79 aa).

This sequence belongs to the XseB family. In terms of assembly, heterooligomer composed of large and small subunits.

It localises to the cytoplasm. It carries out the reaction Exonucleolytic cleavage in either 5'- to 3'- or 3'- to 5'-direction to yield nucleoside 5'-phosphates.. Its function is as follows. Bidirectionally degrades single-stranded DNA into large acid-insoluble oligonucleotides, which are then degraded further into small acid-soluble oligonucleotides. The sequence is that of Exodeoxyribonuclease 7 small subunit from Lactococcus lactis subsp. cremoris (strain SK11).